Reading from the N-terminus, the 899-residue chain is Translation initiation factor IF-2 (899 aa).

2 disordered regions span residues Lys-65–Ile-84 and Thr-91–Lys-310. Positions Ser-68 to Val-82 are enriched in polar residues. A compositionally biased stretch (basic and acidic residues) spans Gln-108–Val-164. Residues Thr-165–Lys-174 are compositionally biased toward polar residues. The span at Gln-177–Asp-236 shows a compositional bias: basic and acidic residues. The span at Ser-262–Asn-276 shows a compositional bias: basic residues. Residues Arg-277–Ala-290 are compositionally biased toward basic and acidic residues. Residues Ala-398 to Lys-567 form the tr-type G domain. The G1 stretch occupies residues Gly-407–Thr-414. Gly-407–Thr-414 is a binding site for GTP. Residues Gly-432–His-436 are G2. The G3 stretch occupies residues Asp-453–Gly-456. Residues Asp-453 to His-457 and Asn-507 to Asp-510 each bind GTP. The tract at residues Asn-507–Asp-510 is G4. Residues Ser-543–Lys-545 form a G5 region.

The protein belongs to the TRAFAC class translation factor GTPase superfamily. Classic translation factor GTPase family. IF-2 subfamily.

Its subcellular location is the cytoplasm. Its function is as follows. One of the essential components for the initiation of protein synthesis. Protects formylmethionyl-tRNA from spontaneous hydrolysis and promotes its binding to the 30S ribosomal subunits. Also involved in the hydrolysis of GTP during the formation of the 70S ribosomal complex. In Pectobacterium carotovorum subsp. carotovorum (strain PC1), this protein is Translation initiation factor IF-2.